A 137-amino-acid polypeptide reads, in one-letter code: MASMNDFIGRWKLVQTENFDEYMKEIGVGLITRKAAAHLKPILEIRLDGETWNFDQFSTFKNTKLSFKLGEEFVENSPDDRTYNSLFTFENGKLTHRQNKIKENHKSSVLTTWLENGKLIQTYQSGDVICRREWERE.

Belongs to the calycin superfamily. Fatty-acid binding protein (FABP) family.

This Caenorhabditis elegans protein is Fatty acid-binding protein homolog 7 (lbp-7).